Here is a 479-residue protein sequence, read N- to C-terminus: Auxin transporter-like protein 1 (479 aa).

Topologically, residues 1 to 58 are cytoplasmic; it reads MLSEKQGEETMMSSLNETIELNEEREEEKGASPGSGFKNFLWHGGSVYDAWFSCASNQ. The chain crosses the membrane as a helical span at residues 59–76; it reads VAQVLLTLPYSFSQLGMI. The Extracellular portion of the chain corresponds to 77–78; that stretch reads SG. A helical membrane pass occupies residues 79 to 99; that stretch reads IIFQVFYGLMGSWTAYLISIL. Topologically, residues 100–134 are cytoplasmic; the sequence is YVEYRSRKEKENVSFKNHVIQWFEVLEGLLGPYWK. The helical transmembrane segment at 135 to 155 threads the bilayer; that stretch reads AIGLAFNCTFLLFGSVIQLIA. Residues 156 to 171 are Extracellular-facing; the sequence is CASNIYYINDHLDKRT. A helical transmembrane segment spans residues 172–192; the sequence is WTYIFGACCATTVFIPSFHNY. At 193–195 the chain is on the cytoplasmic side; that stretch reads RIW. Residues 196–216 form a helical membrane-spanning segment; sequence SFLGLGMTTYTAWYMTIAAIV. Residues 217 to 231 lie on the Extracellular side of the membrane; it reads HGQVENVVHSGPKKM. A helical transmembrane segment spans residues 232-252; sequence VWYFTGATNILYTFGGHAVTV. The Cytoplasmic segment spans residues 253–265; sequence EIMHAMWKPQKFK. A helical transmembrane segment spans residues 266 to 286; it reads AIYFFATLYVFTLTLPSAIAV. Residues 287–313 are Extracellular-facing; the sequence is YWAFGDQLLDHSNAFSLLPRNAWRDAG. The chain crosses the membrane as a helical span at residues 314–334; the sequence is VILMLIHQFITFGFACTPLYF. Topologically, residues 335–355 are cytoplasmic; it reads VWEKVIGMHDTKSIFLRALAR. Residues 356–376 form a helical membrane-spanning segment; it reads LPVVIPIWFLAIIFPFFGPIN. Residue S377 is a topological domain, extracellular. The helical transmembrane segment at 378–398 threads the bilayer; sequence AVGALLVSFTVYVIPASAHML. Residues 399–421 are Cytoplasmic-facing; sequence TYRSASARQNAAEKLPKVIPSWT. Residues 422–442 form a helical membrane-spanning segment; the sequence is LMYVINAFVVIWVTIVGFGFG. The Extracellular portion of the chain corresponds to 443 to 479; the sequence is GWASMTNFIKQVDTFGLFAKCYQCPPKLPASNHTMHH. N474 carries an N-linked (GlcNAc...) asparagine glycan.

Belongs to the amino acid/polyamine transporter 2 family. Amino acid/auxin permease (AAAP) (TC 2.A.18.1) subfamily. In terms of tissue distribution, shoots and roots of nodulating plants. Higher levels in roots, flowers and stems, lower in nodules, leaves, petioles and shoot apices.

The protein resides in the cell membrane. Functionally, carrier protein involved in proton-driven auxin influx. Mediates the formation of auxin gradient from developing leaves (site of auxin biosynthesis) to tips by contributing to the loading of auxin in vascular tissues and facilitating acropetal (base to tip) auxin transport within inner tissues of the root apex, and basipetal (tip to base) auxin transport within outer tissues of the root apex. May be involved in lateral roots and nodules formation. The polypeptide is Auxin transporter-like protein 1 (LAX1) (Medicago truncatula (Barrel medic)).